A 203-amino-acid chain; its full sequence is dATP triphosphohydrolase (203 aa).

Arginine 17 lines the dATP pocket. The Co(2+) site is built by histidine 31, histidine 73, aspartate 74, glutamate 77, aspartate 82, and aspartate 130.

It belongs to the Caudovirales dATP triphosphohydrolase family. The cofactor is Co(2+).

The enzyme catalyses dATP + H2O = 2'-deoxyadenosine + triphosphate + H(+). It catalyses the reaction dADP + H2O = 2'-deoxyadenosine + diphosphate. The catalysed reaction is dAMP + H2O = 2'-deoxyadenosine + phosphate. Catalyzes the hydrolysis of dATP, dADP and dAMP into dA. This step is essential for Z-genome synthesis (containing aminoadenine instead of adenine). Specifically removes dATP and its precursor dADP from the nucleotide pool of the host, preventing the incorporation of A into the phage genome and favoring the integration of the Z-base into the viral genome. This chain is dATP triphosphohydrolase (datZ), found in Acinetobacter phage SH-Ab 15497.